Here is a 258-residue protein sequence, read N- to C-terminus: Exosome complex component Rrp41 (258 aa).

This sequence belongs to the RNase PH family. Rrp41 subfamily. As to quaternary structure, component of the archaeal exosome complex. Forms a hexameric ring-like arrangement composed of 3 Rrp41-Rrp42 heterodimers. The hexameric ring associates with a trimer of Rrp4 and/or Csl4 subunits.

It is found in the cytoplasm. In terms of biological role, catalytic component of the exosome, which is a complex involved in RNA degradation. Has 3'-&gt;5' exoribonuclease activity. Can also synthesize heteromeric RNA-tails. In Archaeoglobus fulgidus (strain ATCC 49558 / DSM 4304 / JCM 9628 / NBRC 100126 / VC-16), this protein is Exosome complex component Rrp41.